The following is a 327-amino-acid chain: Beta-ketoacyl-[acyl-carrier-protein] synthase III (327 aa).

Active-site residues include Cys-114 and His-254. The segment at 255-259 is ACP-binding; it reads QANQR. Asn-284 is an active-site residue.

It belongs to the thiolase-like superfamily. FabH family. Homodimer.

Its subcellular location is the cytoplasm. It catalyses the reaction malonyl-[ACP] + acetyl-CoA + H(+) = 3-oxobutanoyl-[ACP] + CO2 + CoA. The protein operates within lipid metabolism; fatty acid biosynthesis. Catalyzes the condensation reaction of fatty acid synthesis by the addition to an acyl acceptor of two carbons from malonyl-ACP. Catalyzes the first condensation reaction which initiates fatty acid synthesis and may therefore play a role in governing the total rate of fatty acid production. Possesses both acetoacetyl-ACP synthase and acetyl transacylase activities. Its substrate specificity determines the biosynthesis of branched-chain and/or straight-chain of fatty acids. The sequence is that of Beta-ketoacyl-[acyl-carrier-protein] synthase III from Levilactobacillus brevis (strain ATCC 367 / BCRC 12310 / CIP 105137 / JCM 1170 / LMG 11437 / NCIMB 947 / NCTC 947) (Lactobacillus brevis).